The sequence spans 387 residues: Cytochrome b (387 aa).

8 helical membrane-spanning segments follow: residues phenylalanine 32–methionine 52, tryptophan 76–leucine 98, leucine 113–valine 133, phenylalanine 179–isoleucine 199, phenylalanine 225–phenylalanine 245, leucine 290–isoleucine 310, leucine 325–alanine 345, and leucine 353–valine 373. The heme b site is built by histidine 82 and histidine 96. Heme b is bound by residues histidine 183 and histidine 197.

Belongs to the cytochrome b family. The main subunits of complex b-c1 are: cytochrome b, cytochrome c1 and the Rieske protein. Heme b is required as a cofactor.

It is found in the mitochondrion inner membrane. Its function is as follows. Component of the ubiquinol-cytochrome c reductase complex (complex III or cytochrome b-c1 complex) that is part of the mitochondrial respiratory chain. The b-c1 complex mediates electron transfer from ubiquinol to cytochrome c. Contributes to the generation of a proton gradient across the mitochondrial membrane that is then used for ATP synthesis. The sequence is that of Cytochrome b (cytB) from Dictyostelium citrinum (Slime mold).